Reading from the N-terminus, the 455-residue chain is MSSFANLFGKSTKVDENIEQLFKNTRDGPVSKDELVKKQRTVIKIPKVTAPKQQTNENESTLNQSANESDEEEEEYNDESNEGDDSDDAEQTEPTSKNDDENENLEAQYFDKLLSEQNEEQDESKESSEAKSSKVAEERTKAKVATTVDLKEKELEKADRTVFVGNVPADVITSKIIAKNFKNLFKHYGKIDSIRYRSISFDEHLPRKVAFAKKNLHKSRDSVNAYIVYKEKPASIAAKELNATVFEDHHLRVDHVSHPAPKDNKRTIFVGNLDFEEKEETLWKYFNSKLDQDVESVRIIRDSKTNLGKGFALVQFKDTLSVNKALLLNDKPLETGTQKKGRKLRISRAKSNAKPSLMSPNHFDNQKKKFAAGKSQQKLNDNQKTKIGRAQSTLGKADRSTVGKAKRIILEGQRATKGEAIKGIKGSKKGKKVKKPRIRERSTKFKEERKTMNKV.

2 disordered regions span residues Met1–Asn104 and Gln117–Ala142. Basic and acidic residues predominate over residues Asn24–Lys37. A compositionally biased stretch (polar residues) spans Pro51 to Ala66. Residues Glu68 to Gln91 show a composition bias toward acidic residues. Residues Ser124 to Lys141 show a composition bias toward basic and acidic residues. RRM domains follow at residues Arg160–His258 and Arg266–Ser351. Disordered regions lie at residues Leu333–Val402 and Ala420–Val455. Basic residues predominate over residues Lys339–Arg348. Polar residues predominate over residues Ala349–Phe363. Over residues Lys425–Ile438 the composition is skewed to basic residues. Residues Arg439–Val455 are compositionally biased toward basic and acidic residues.

It belongs to the RRM RBM34 family.

Its subcellular location is the nucleus. It localises to the nucleolus. In terms of biological role, involved in pre-25S rRNA processing. This chain is Nucleolar protein 12 (NOP12), found in Candida albicans (strain SC5314 / ATCC MYA-2876) (Yeast).